Here is a 336-residue protein sequence, read N- to C-terminus: D-erythrose-4-phosphate dehydrogenase (336 aa).

NAD(+) contacts are provided by residues 11–12 (RI) and Arg-80. Substrate-binding positions include 153 to 155 (SCT), Arg-199, 212 to 213 (TK), and Arg-235. The active-site Nucleophile is the Cys-154. Asn-317 is an NAD(+) binding site.

This sequence belongs to the glyceraldehyde-3-phosphate dehydrogenase family. Epd subfamily. As to quaternary structure, homotetramer.

It is found in the cytoplasm. It carries out the reaction D-erythrose 4-phosphate + NAD(+) + H2O = 4-phospho-D-erythronate + NADH + 2 H(+). It participates in cofactor biosynthesis; pyridoxine 5'-phosphate biosynthesis; pyridoxine 5'-phosphate from D-erythrose 4-phosphate: step 1/5. Functionally, catalyzes the NAD-dependent conversion of D-erythrose 4-phosphate to 4-phosphoerythronate. The chain is D-erythrose-4-phosphate dehydrogenase from Aeromonas hydrophila subsp. hydrophila (strain ATCC 7966 / DSM 30187 / BCRC 13018 / CCUG 14551 / JCM 1027 / KCTC 2358 / NCIMB 9240 / NCTC 8049).